The following is a 67-amino-acid chain: Conotoxin VnMMSK-02 (67 aa).

Positions 1–20 are cleaved as a signal peptide; that stretch reads MMSKLGALLTICLLLFPLTA. Positions 21 to 52 are excised as a propeptide; the sequence is LPLDGDQPADRPAERMQDDISSEQHPLFDKER. At glutamine 53 the chain carries Pyrrolidone carboxylic acid. 3 cysteine pairs are disulfide-bonded: cysteine 54–cysteine 66, cysteine 55–cysteine 62, and cysteine 59–cysteine 65. The residue at position 64 (proline 64) is a 4-hydroxyproline. Cysteine 66 carries the cysteine amide modification.

It belongs to the conotoxin M superfamily. In terms of tissue distribution, expressed by the venom duct.

It localises to the secreted. The polypeptide is Conotoxin VnMMSK-02 (Conus ventricosus (Mediterranean cone)).